The chain runs to 165 residues: Small ribosomal subunit protein bS16 (165 aa).

The disordered stretch occupies residues 84–165 (WTHGNNPEKG…EAPAEEAAEG (82 aa)). The span at 89–130 (NPEKGKPGKKAQERLAERAQREEERKQAEADAKAAAEAEKAA) shows a compositional bias: basic and acidic residues. Residues 131 to 157 (AAEAAAAAAAAPAVEEAPAEEAPAAEA) are compositionally biased toward low complexity.

Belongs to the bacterial ribosomal protein bS16 family.

This is Small ribosomal subunit protein bS16 from Caulobacter vibrioides (strain ATCC 19089 / CIP 103742 / CB 15) (Caulobacter crescentus).